The following is a 93-amino-acid chain: Allatostatin C (93 aa).

The N-terminal stretch at 1-23 (MSSVRNIAALALVLLVLAEWSAA) is a signal peptide. Residues 24–61 (MPTTDKDKERLLNTVDLIDDDGSIETALINYLFTKQIV) constitute a propeptide that is removed on maturation. Cysteines 83 and 90 form a disulfide.

It localises to the secreted. Its function is as follows. Inhibits juvenile hormone biosynthesis. This chain is Allatostatin C, found in Camponotus floridanus (Florida carpenter ant).